Here is a 423-residue protein sequence, read N- to C-terminus: Maltooligosaccharide ABC transporter solute-binding lipoprotein (423 aa).

The first 24 residues, 1-24, serve as a signal peptide directing secretion; it reads MSSKFMKSTAVLGTVTLASLLLVA. Cys-25 is lipidated: N-palmitoyl cysteine. Cys-25 is lipidated: S-diacylglycerol cysteine. Residues Tyr-52, Asp-77, Asp-83, 103-104, Glu-148, Asp-193, Asn-196, 251-254, Trp-274, and Lys-307 contribute to the substrate site; these read DR and EGAG.

Belongs to the bacterial solute-binding protein 1 family.

The protein resides in the cell membrane. Its function is as follows. Part of an ABC transporter complex involved in the uptake of maltodextrins. Binds glycogen-derived linear maltooligosaccharides increasing in size from maltotriose to maltooctaose with the highest affinity for maltotriose. Has a very weak affinity for maltose. Has also a very low affinity for maltotetraitol, indicating that the binding is selective for maltooligosaccharides with an intact reducing end. The sequence is that of Maltooligosaccharide ABC transporter solute-binding lipoprotein (malX) from Streptococcus pneumoniae (strain ATCC BAA-255 / R6).